Here is a 140-residue protein sequence, read N- to C-terminus: Alkaline proteinase inhibitor (140 aa).

A signal peptide spans 1 to 25; sequence MPSSVQATAGLLATLMMFCGEVAMA.

The protein belongs to the protease inhibitor I38 family.

It localises to the periplasm. Inhibitor of the alkaline protease. The polypeptide is Alkaline proteinase inhibitor (inh) (Pseudomonas brassicacearum (strain NFM421)).